The chain runs to 312 residues: Elongation factor Ts (312 aa).

Residues 84 to 87 are involved in Mg(2+) ion dislocation from EF-Tu; it reads TDFL.

This sequence belongs to the EF-Ts family.

It localises to the cytoplasm. Functionally, associates with the EF-Tu.GDP complex and induces the exchange of GDP to GTP. It remains bound to the aminoacyl-tRNA.EF-Tu.GTP complex up to the GTP hydrolysis stage on the ribosome. This is Elongation factor Ts from Caulobacter sp. (strain K31).